The primary structure comprises 269 residues: Tryptophan synthase alpha chain (269 aa).

Catalysis depends on proton acceptor residues E49 and D60.

It belongs to the TrpA family. Tetramer of two alpha and two beta chains.

The catalysed reaction is (1S,2R)-1-C-(indol-3-yl)glycerol 3-phosphate + L-serine = D-glyceraldehyde 3-phosphate + L-tryptophan + H2O. The protein operates within amino-acid biosynthesis; L-tryptophan biosynthesis; L-tryptophan from chorismate: step 5/5. Functionally, the alpha subunit is responsible for the aldol cleavage of indoleglycerol phosphate to indole and glyceraldehyde 3-phosphate. The chain is Tryptophan synthase alpha chain from Azotobacter vinelandii (strain DJ / ATCC BAA-1303).